The chain runs to 158 residues: MNKEVFATKTAIILGDRDGIPGQAIEACIKTTGAHVAFSTTECFVUTSAGAMDLENQKRIKALADEFGAENIIVILGGAEAEASGLACETVTTGDPTFAGPLAGVQLGLSCYHVVEDAIKEAVDPAVYEEQIGMMEMVLDVDAIKAEMQQYREEPVEA.

The active site involves Sec-46. Position 46 (Sec-46) is a non-standard amino acid, selenocysteine.

This sequence belongs to the GrdA family. Monomer. Component of the glycine, sarcosine and betaine reductase complexes, together with components B and C.

It carries out the reaction acetyl phosphate + [thioredoxin]-disulfide + NH4(+) + H2O = [thioredoxin]-dithiol + glycine + phosphate + H(+). It catalyses the reaction acetyl phosphate + methylamine + [thioredoxin]-disulfide + H2O = sarcosine + [thioredoxin]-dithiol + phosphate + H(+). The catalysed reaction is acetyl phosphate + trimethylamine + [thioredoxin]-disulfide + H2O = glycine betaine + [thioredoxin]-dithiol + phosphate + H(+). Its function is as follows. In the first step of glycine, betaine and sarcosine reductases, the substrate is bound to component PB via a Schiff base intermediate. Then the PB-activated substrate is nucleophilically attacked by the selenol anion of component PA to transform it to a carboxymethylated selenoether and the respective amine. By action of component PC, acetyl phosphate is formed, leaving component PA in its oxidized state. Finally component PA becomes reduced by the thioredoxin system to start a new catalytic cycle of reductive deamination. This is Glycine/sarcosine/betaine reductase complex component A1 (grdA1) from Photobacterium profundum (strain SS9).